Here is a 337-residue protein sequence, read N- to C-terminus: Dihydroorotate dehydrogenase (quinone) (337 aa).

FMN-binding positions include Ala-62–Lys-66 and Thr-86. Substrate is bound at residue Lys-66. Asn-111–Phe-115 is a binding site for substrate. Residues Asn-140 and Asn-173 each contribute to the FMN site. Asn-173 is a binding site for substrate. Ser-176 serves as the catalytic Nucleophile. Position 178 (Asn-178) interacts with substrate. FMN contacts are provided by Lys-218 and Thr-246. Asn-247–Thr-248 lines the substrate pocket. FMN-binding positions include Gly-269, Gly-298, and Tyr-319 to Ser-320.

Belongs to the dihydroorotate dehydrogenase family. Type 2 subfamily. Monomer. FMN is required as a cofactor.

The protein localises to the cell membrane. It carries out the reaction (S)-dihydroorotate + a quinone = orotate + a quinol. Its pathway is pyrimidine metabolism; UMP biosynthesis via de novo pathway; orotate from (S)-dihydroorotate (quinone route): step 1/1. Its function is as follows. Catalyzes the conversion of dihydroorotate to orotate with quinone as electron acceptor. In Wigglesworthia glossinidia brevipalpis, this protein is Dihydroorotate dehydrogenase (quinone).